The primary structure comprises 141 residues: Nucleoside diphosphate kinase (141 aa).

The ATP site is built by Lys11, Phe59, Arg87, Thr93, Arg104, and Asn114. His117 (pros-phosphohistidine intermediate) is an active-site residue.

It belongs to the NDK family. In terms of assembly, homotetramer. The cofactor is Mg(2+).

Its subcellular location is the cytoplasm. It carries out the reaction a 2'-deoxyribonucleoside 5'-diphosphate + ATP = a 2'-deoxyribonucleoside 5'-triphosphate + ADP. The enzyme catalyses a ribonucleoside 5'-diphosphate + ATP = a ribonucleoside 5'-triphosphate + ADP. Its function is as follows. Major role in the synthesis of nucleoside triphosphates other than ATP. The ATP gamma phosphate is transferred to the NDP beta phosphate via a ping-pong mechanism, using a phosphorylated active-site intermediate. The protein is Nucleoside diphosphate kinase of Xylella fastidiosa (strain 9a5c).